Reading from the N-terminus, the 105-residue chain is uncharacterized protein (105 aa).

A helical transmembrane segment spans residues 64–84 (ILLISIFFLLLFALPQHTMGI).

It is found in the membrane. This is an uncharacterized protein from Saccharomyces cerevisiae (strain ATCC 204508 / S288c) (Baker's yeast).